Consider the following 922-residue polypeptide: 1,4-alpha-glucan-branching enzyme 1, chloroplastic/amyloplastic (922 aa).

The N-terminal 47 residues, 1–47 (MVYTISGIRFPVLPSLHKSTLRCDRRASSHSFFLKNNSSSFSRTSLY), are a transit peptide targeting the chloroplast. A disordered region spans residues 83 to 130 (LENPDITSEDAQNLEDLTMKDGNKYNIDESTSSYREVGDEKGSVTSSS). The span at 99-109 (LTMKDGNKYNI) shows a compositional bias: basic and acidic residues. Asp-494 acts as the Nucleophile in catalysis. Glu-549 (proton donor) is an active-site residue. The segment at 870–922 (VESEPIELSVEEAESEPIERSVEEVESETTQQSVEVESETTQQSVEVESETTQ) is disordered. Positions 897 to 922 (ETTQQSVEVESETTQQSVEVESETTQ) are enriched in low complexity.

The protein belongs to the glycosyl hydrolase 13 family. GlgB subfamily. As to quaternary structure, monomer. In terms of tissue distribution, expressed in roots, leaves, stipules, pods and flowers.

It is found in the plastid. Its subcellular location is the chloroplast. The protein resides in the amyloplast. It catalyses the reaction Transfers a segment of a (1-&gt;4)-alpha-D-glucan chain to a primary hydroxy group in a similar glucan chain.. Its pathway is glycan biosynthesis; starch biosynthesis. Its function is as follows. Catalyzes the formation of the alpha-1,6-glucosidic linkages in starch by scission of a 1,4-alpha-linked oligosaccharide from growing alpha-1,4-glucan chains and the subsequent attachment of the oligosaccharide to the alpha-1,6 position. May preferentially transfer short chains during branching. Responsible for the synthesis of about 75% of the amylopectin found in the starch granules of mature embryos. The sequence is that of 1,4-alpha-glucan-branching enzyme 1, chloroplastic/amyloplastic (SBEI) from Pisum sativum (Garden pea).